The chain runs to 528 residues: Importin subunit alpha-7 (528 aa).

The 56-residue stretch at 1-56 folds into the IBB domain; the sequence is MKGGETMSVRRSGYKAVVDGVGGRRRREDDMVEIRKAKREESLLKKRREALPHSPS. ARM repeat units lie at residues 93–133, 136–175, 178–218, 220–259, 262–301, 304–344, 347–386, and 390–429; these read NVRV…NIAS, SENTEVVIDHGAVAILVRLLNSPYDVVREQVVWALGNISG, PRCR…NLCR, KPQPPFDQVSAALPALAQLIRLDDKELLAYTCWALVYLSD, NEKIQAVIEANVCARLIGLSIHRSPSVITPALRTIGNIVT, DSQT…NITA, QSQIQAVFDADICPALVNLLQNSEGDVKKEAAWAICNAIA, and YKQIMFLVKQECIKPLCDLLTCSDTQLVMVCLEALKKILK.

Belongs to the importin alpha family. Forms a complex with importin subunit beta-1.

The protein localises to the nucleus envelope. Functionally, binds to conventional NLS motifs and mediates nuclear protein import across the nuclear envelope. Acts as a cellular receptor for the nuclear import of the virD2 protein of Agrobacterium, but is not essential for Agrobacterium-mediated root transformation. This is Importin subunit alpha-7 from Arabidopsis thaliana (Mouse-ear cress).